A 263-amino-acid polypeptide reads, in one-letter code: Type-2Bb cytolytic delta-endotoxin (263 aa).

This sequence belongs to the cyt1/cyt2 endotoxin family. Active after proteolytic processing.

Functionally, kills the larvae of dipteran insects by making pores in the epithelial cell membrane of the insect midgut. In Bacillus thuringiensis subsp. jegathesan, this protein is Type-2Bb cytolytic delta-endotoxin (cyt2Bb1).